Consider the following 198-residue polypeptide: NAD(P)H dehydrogenase (quinone) (198 aa).

One can recognise a Flavodoxin-like domain in the interval valine 4–valine 190. Residues serine 10 to isoleucine 15 and threonine 78 to phenylalanine 80 contribute to the FMN site. Tyrosine 12 contributes to the NAD(+) binding site. Substrate is bound at residue tryptophan 98. FMN contacts are provided by residues serine 113–glycine 119 and histidine 134.

This sequence belongs to the WrbA family. FMN serves as cofactor.

It carries out the reaction a quinone + NADH + H(+) = a quinol + NAD(+). It catalyses the reaction a quinone + NADPH + H(+) = a quinol + NADP(+). The chain is NAD(P)H dehydrogenase (quinone) from Rhizobium johnstonii (strain DSM 114642 / LMG 32736 / 3841) (Rhizobium leguminosarum bv. viciae).